We begin with the raw amino-acid sequence, 392 residues long: Cell division protein FtsZ (392 aa).

Residues 24–28 (GGGCN), 111–113 (GTG), Glu142, Arg145, and Asp189 each bind GTP.

It belongs to the FtsZ family. As to quaternary structure, homodimer. Polymerizes to form a dynamic ring structure in a strictly GTP-dependent manner. Interacts directly with several other division proteins.

The protein localises to the cytoplasm. In terms of biological role, essential cell division protein that forms a contractile ring structure (Z ring) at the future cell division site. The regulation of the ring assembly controls the timing and the location of cell division. One of the functions of the FtsZ ring is to recruit other cell division proteins to the septum to produce a new cell wall between the dividing cells. Binds GTP and shows GTPase activity. The sequence is that of Cell division protein FtsZ from Neisseria meningitidis serogroup A / serotype 4A (strain DSM 15465 / Z2491).